A 329-amino-acid polypeptide reads, in one-letter code: 2-oxoglutarate-dependent dioxygenase mpl2 (329 aa).

Residues 183–288 enclose the Fe2OG dioxygenase domain; that stretch reads PACPLRLLHY…RYSVVFFFDG (106 aa). Fe cation is bound by residues H211, D213, and H269. Residue R279 coordinates 2-oxoglutarate.

This sequence belongs to the iron/ascorbate-dependent oxidoreductase family. Requires Fe(2+) as cofactor.

Its pathway is mycotoxin biosynthesis. Functionally, 2-oxoglutarate-dependent dioxygenase; part of the gene cluster that mediates the biosynthesis of the mycotoxin citrinin, a hepato-nephrotoxic compound to humans due to inhibition of respiration complex III. The pathway begins with the synthesis of a keto-aldehyde intermediate by the citrinin PKS (pksCT) from successive condensations of 4 malonyl-CoA units, presumably with a simple acetyl-CoA starter unit. Release of the keto-aldehyde intermediate is consistent with the presence of the C-terminal reductive release domain. Mp11 collaborates with pksCT by catalyzing the hydrolysis of ACP-bound acyl intermediates to free the ACP from stalled intermediates. Mpl2 then catalyzes the oxidation of the C-12 methyl of the ketone intermediate to an alcohol intermediate which is further oxidized by the oxidoreductase mpl7 to produce a bisaldehyde intermediate. The fourth catalytic step is catalyzed by the mpl4 aldehyde dehydrogenase. The final transformation is the reduction of C-3 by mpl6 to provide the chemically stable citrinin nucleus. This chain is 2-oxoglutarate-dependent dioxygenase mpl2, found in Monascus purpureus (Red mold).